The sequence spans 955 residues: Eukaryotic translation initiation factor 3 subunit C (955 aa).

Disordered stretches follow at residues 1–22 (MSRF…SEPV) and 157–299 (RAAP…EEGW). Residues 162 to 183 (DFAEEEEDDEREDEKGSDEEEE) are compositionally biased toward acidic residues. The span at 206-218 (VKPVADSDSSDWG) shows a compositional bias: low complexity. The span at 219 to 229 (SDSDSDSTSSD) shows a compositional bias: acidic residues. The segment covering 230–250 (EDAKYTSIRDRFLKKPEKGTE) has biased composition (basic and acidic residues). A compositionally biased stretch (acidic residues) spans 288-297 (MFDENEEEEE). Positions 658-834 (FHMHINLELL…ETIVMHRSEP (177 aa)) constitute a PCI domain. The disordered stretch occupies residues 865–955 (NFFQRGGNQG…RNVEYQNKAE (91 aa)). Low complexity predominate over residues 882 to 894 (YRNQNQNQNWNNN). The span at 911 to 955 (GEGREQREHHRDHHRDQREHREHQNREFREQREQMRNVEYQNKAE) shows a compositional bias: basic and acidic residues.

It belongs to the eIF-3 subunit C family. In terms of assembly, component of the eukaryotic translation initiation factor 3 (eIF-3) complex.

The protein localises to the cytoplasm. In terms of biological role, component of the eukaryotic translation initiation factor 3 (eIF-3) complex, which is involved in protein synthesis of a specialized repertoire of mRNAs and, together with other initiation factors, stimulates binding of mRNA and methionyl-tRNAi to the 40S ribosome. The eIF-3 complex specifically targets and initiates translation of a subset of mRNAs involved in cell proliferation. This Anopheles gambiae (African malaria mosquito) protein is Eukaryotic translation initiation factor 3 subunit C.